Here is a 328-residue protein sequence, read N- to C-terminus: Protoheme IX farnesyltransferase (328 aa).

8 consecutive transmembrane segments (helical) span residues 31–51 (IILL…KGEV), 53–73 (LFLL…ANAI), 120–140 (VFAN…YVGV), 153–173 (IVIG…AVTG), 181–201 (LLFA…AIYI), 226–246 (IWVY…PLHV), 250–270 (IYAV…WQLL), and 285–305 (YSIY…LPFT).

It belongs to the UbiA prenyltransferase family. Protoheme IX farnesyltransferase subfamily.

The protein localises to the cell inner membrane. It carries out the reaction heme b + (2E,6E)-farnesyl diphosphate + H2O = Fe(II)-heme o + diphosphate. Its pathway is porphyrin-containing compound metabolism; heme O biosynthesis; heme O from protoheme: step 1/1. Its function is as follows. Converts heme B (protoheme IX) to heme O by substitution of the vinyl group on carbon 2 of heme B porphyrin ring with a hydroxyethyl farnesyl side group. This is Protoheme IX farnesyltransferase from Trichodesmium erythraeum (strain IMS101).